We begin with the raw amino-acid sequence, 440 residues long: Syntrophin-1 (440 aa).

PH domains are found at residues 2–208 and 227–340; these read AAVR…ACTT and QVRH…IGGY. One can recognise a PDZ domain in the interval 45–128; sequence TVRVVKYDGN…VVDLQVQYRR (84 aa). The region spanning 384-440 is the SU domain; the sequence is SFETIRATGDDGGRFLWVDFGPPHGEQELDLLNSAKPVVFILHSFLATKVYRLGLYA.

This sequence belongs to the syntrophin family. In terms of assembly, component of the dystrophin glycoprotein complex (DGC). Interacts with dyb-1, dys-1 and snf-6 to form the DGC. Expressed in neurons and muscles; particularly strong expression in the body wall, head and vulval muscles, and in ventral nerve cord (at protein level).

It localises to the membrane. It is found in the cytoplasm. Its subcellular location is the cytoskeleton. Its function is as follows. Adapter protein that binds to and probably organizes the subcellular localization of a variety of membrane proteins. May link various receptors to the actin cytoskeleton and the dystrophin glycoprotein complex (DGC). May also act by slowing calcium channel activity via a direct or indirect mechanism potentially involving other second messengers. Plays an early role in the formation of the neuromuscular junction and is necessary for muscle maintenance. The chain is Syntrophin-1 from Caenorhabditis elegans.